A 492-amino-acid chain; its full sequence is Malonyl-CoA decarboxylase, mitochondrial (492 aa).

The N-terminal 38 residues, 1-38, are a transit peptide targeting the mitochondrion; the sequence is MRGLGPSLRARRLLPLRYPPRPPGPRGPRLCSGLTASA. Residues 39–189 form an alpha-helical domain region; it reads MDELLRRAVP…VLKSMLSEWF (151 aa). An N6-acetyllysine modification is found at Lys58. Lys167 bears the N6-acetyllysine; alternate mark. Residue Lys167 is modified to N6-succinyllysine; alternate. The tract at residues 190–492 is catalytic domain; that stretch reads SSGFLNLERV…VAQFQSNSKL (303 aa). Lys210 bears the N6-acetyllysine mark. Lys221 is subject to N6-succinyllysine. 298–304 is a malonyl-CoA binding site; sequence QGVELGT. The residue at position 316 (Lys316) is an N6-acetyllysine. A malonyl-CoA-binding site is contributed by Ser328. Catalysis depends on Ser328, which acts as the Proton acceptor. Lys385 carries the N6-acetyllysine; alternate modification. At Lys385 the chain carries N6-succinyllysine; alternate. Lys388 is subject to N6-acetyllysine. His422 contacts malonyl-CoA. His422 acts as the Proton donor in catalysis. Lys441 and Lys471 each carry N6-acetyllysine. The Microbody targeting signal signature appears at 490-492; it reads SKL.

Homotetramer. Dimer of dimers. The two subunits within a dimer display conformational differences suggesting that at any given moment, only one of the two subunits is competent for malonyl-CoA binding and catalytic activity. Under oxidizing conditions, can form disulfide-linked homotetramers (in vitro). Associates with the peroxisomal targeting signal receptor PEX5. In terms of processing, acetylation at Lys-471 activates malonyl-CoA decarboxylase activity. Deacetylation at Lys-471 by SIRT4 represses activity, leading to promote lipogenesis. Interchain disulfide bonds may form in peroxisomes (Potential). Interchain disulfide bonds are not expected to form in the reducing environment of the cytoplasm and mitochondria. As to expression, expressed in liver, heart, skeletal muscles and adipose tissues (at protein level). Ubiquitous. Strongly expressed in liver, kidney, heart, skeletal muscle and adipose tissues. Weakly expressed in brain.

It localises to the cytoplasm. The protein resides in the mitochondrion matrix. Its subcellular location is the peroxisome. It is found in the peroxisome matrix. It carries out the reaction malonyl-CoA + H(+) = acetyl-CoA + CO2. The protein operates within metabolic intermediate biosynthesis; acetyl-CoA biosynthesis; acetyl-CoA from malonyl-CoA: step 1/1. With respect to regulation, malonyl-CoA decarboxylase activity does not require any cofactors or divalent metal ions. Functionally, catalyzes the conversion of malonyl-CoA to acetyl-CoA. In the fatty acid biosynthesis MCD selectively removes malonyl-CoA and thus assures that methyl-malonyl-CoA is the only chain elongating substrate for fatty acid synthase and that fatty acids with multiple methyl side chains are produced. In peroxisomes it may be involved in degrading intraperoxisomal malonyl-CoA, which is generated by the peroxisomal beta-oxidation of odd chain-length dicarboxylic fatty acids. Plays a role in the metabolic balance between glucose and lipid oxidation in muscle independent of alterations in insulin signaling. May play a role in controlling the extent of ischemic injury by promoting glucose oxidation. The sequence is that of Malonyl-CoA decarboxylase, mitochondrial from Rattus norvegicus (Rat).